Reading from the N-terminus, the 207-residue chain is Small ribosomal subunit protein uS4c (207 aa).

The tract at residues 22–51 (TQKNCTRDFPPGQHGPKKKGGGNQKTKESQ) is disordered. The S4 RNA-binding domain occupies 97-158 (MRLDTIIFRL…NSQNFVKNLL (62 aa)).

The protein belongs to the universal ribosomal protein uS4 family. As to quaternary structure, part of the 30S ribosomal subunit. Contacts protein S5. The interaction surface between S4 and S5 is involved in control of translational fidelity.

It localises to the plastid. The protein resides in the chloroplast. In terms of biological role, one of the primary rRNA binding proteins, it binds directly to 16S rRNA where it nucleates assembly of the body of the 30S subunit. Its function is as follows. With S5 and S12 plays an important role in translational accuracy. This Chlorella vulgaris (Green alga) protein is Small ribosomal subunit protein uS4c (rps4).